Consider the following 132-residue polypeptide: Small ribosomal subunit protein uS8 (132 aa).

This sequence belongs to the universal ribosomal protein uS8 family. Part of the 30S ribosomal subunit. Contacts proteins S5 and S12.

Its function is as follows. One of the primary rRNA binding proteins, it binds directly to 16S rRNA central domain where it helps coordinate assembly of the platform of the 30S subunit. The protein is Small ribosomal subunit protein uS8 of Mycolicibacterium smegmatis (strain ATCC 700084 / mc(2)155) (Mycobacterium smegmatis).